Consider the following 516-residue polypeptide: UDP-N-acetylmuramyl-tripeptide synthetase (516 aa).

A UDP-N-acetyl-alpha-D-muramoyl-L-alanyl-D-glutamate-binding site is contributed by Ser-38. 116–122 (GTKGKTT) serves as a coordination point for ATP. UDP-N-acetyl-alpha-D-muramoyl-L-alanyl-D-glutamate is bound by residues 162-163 (TT), Ser-189, and Arg-197. Position 231 is an N6-carboxylysine (Lys-231).

The protein belongs to the MurCDEF family. MurE subfamily. In terms of processing, carboxylation is probably crucial for Mg(2+) binding and, consequently, for the gamma-phosphate positioning of ATP.

The protein localises to the cytoplasm. It functions in the pathway cell wall biogenesis; peptidoglycan biosynthesis. In terms of biological role, catalyzes the addition of an amino acid to the nucleotide precursor UDP-N-acetylmuramoyl-L-alanyl-D-glutamate (UMAG) in the biosynthesis of bacterial cell-wall peptidoglycan. This is UDP-N-acetylmuramyl-tripeptide synthetase from Lactobacillus delbrueckii subsp. bulgaricus (strain ATCC 11842 / DSM 20081 / BCRC 10696 / JCM 1002 / NBRC 13953 / NCIMB 11778 / NCTC 12712 / WDCM 00102 / Lb 14).